We begin with the raw amino-acid sequence, 99 residues long: Putative membrane protein insertion efficiency factor (99 aa).

Belongs to the UPF0161 family.

The protein resides in the cell membrane. Functionally, could be involved in insertion of integral membrane proteins into the membrane. The protein is Putative membrane protein insertion efficiency factor of Levilactobacillus brevis (strain ATCC 367 / BCRC 12310 / CIP 105137 / JCM 1170 / LMG 11437 / NCIMB 947 / NCTC 947) (Lactobacillus brevis).